A 235-amino-acid chain; its full sequence is Voltage-gated hydrogen channel 1 (235 aa).

Over 1 to 65 (MSRYLKHFTA…SLRKLYSTER (65 aa)) the chain is Cytoplasmic. Residues 66–86 (FQIVVVCLVVLDAIFVLCELL) form a helical membrane-spanning segment. Residues 87–103 (IDLSIIEADHHRIAPQV) lie on the Extracellular side of the membrane. A helical membrane pass occupies residues 104-126 (FHYLSLALLTFFMVELAGKIFAY). The Cytoplasmic segment spans residues 127 to 134 (RLEFLHHK). Residues 135-155 (FEVFDGIVVVVSFILDIIYIS) form a helical membrane-spanning segment. Residues 156–162 (KEDAFDA) are Extracellular-facing. The chain crosses the membrane as a helical span at residues 163–183 (MGLLILLRLWRVARIINGILV). The Cytoplasmic segment spans residues 184-235 (SVQNRANHRVEKLKEINESLVHQVNELKEQNTKMDQENVRLRALLKDHSIDF). The stretch at 187–231 (NRANHRVEKLKEINESLVHQVNELKEQNTKMDQENVRLRALLKDH) forms a coiled coil.

Belongs to the hydrogen channel family. In terms of assembly, homodimer.

Its subcellular location is the membrane. The protein localises to the cell membrane. In terms of biological role, mediates the voltage-dependent proton permeability of excitable membranes. Forms a proton-selective channel through which protons may pass in accordance with their electrochemical gradient. The chain is Voltage-gated hydrogen channel 1 (hvcn1) from Danio rerio (Zebrafish).